The sequence spans 373 residues: D-alanine--D-alanine ligase (373 aa).

The 208-residue stretch at 156-363 (KKLLAADGLP…YPTLLATMIE (208 aa)) folds into the ATP-grasp domain. 184-239 (CERLGLPVFVKPARGGSSIGVSRVSSWDQLPAAVARARRHDPKVIVEAAISGRELE) provides a ligand contact to ATP. 3 residues coordinate Mg(2+): D318, E330, and N332.

The protein belongs to the D-alanine--D-alanine ligase family. Requires Mg(2+) as cofactor. The cofactor is Mn(2+).

The protein localises to the cytoplasm. The catalysed reaction is 2 D-alanine + ATP = D-alanyl-D-alanine + ADP + phosphate + H(+). The protein operates within cell wall biogenesis; peptidoglycan biosynthesis. Functionally, cell wall formation. This is D-alanine--D-alanine ligase from Mycobacterium tuberculosis (strain ATCC 25177 / H37Ra).